Consider the following 329-residue polypeptide: Ribosomal RNA small subunit methyltransferase C (329 aa).

Belongs to the methyltransferase superfamily. RsmC family. In terms of assembly, monomer.

Its subcellular location is the cytoplasm. The catalysed reaction is guanosine(1207) in 16S rRNA + S-adenosyl-L-methionine = N(2)-methylguanosine(1207) in 16S rRNA + S-adenosyl-L-homocysteine + H(+). Specifically methylates the guanine in position 1207 of 16S rRNA in the 30S particle. The chain is Ribosomal RNA small subunit methyltransferase C from Actinobacillus pleuropneumoniae serotype 5b (strain L20).